The following is a 178-amino-acid chain: tRNA (cytidine(56)-2'-O)-methyltransferase (178 aa).

Residues L84, 112–116 (GAEKV), and 130–137 (VGNQPHSE) contribute to the S-adenosyl-L-methionine site.

It belongs to the aTrm56 family. As to quaternary structure, homodimer.

The protein resides in the cytoplasm. It catalyses the reaction cytidine(56) in tRNA + S-adenosyl-L-methionine = 2'-O-methylcytidine(56) in tRNA + S-adenosyl-L-homocysteine + H(+). Functionally, specifically catalyzes the AdoMet-dependent 2'-O-ribose methylation of cytidine at position 56 in tRNAs. The polypeptide is tRNA (cytidine(56)-2'-O)-methyltransferase (Methanocella arvoryzae (strain DSM 22066 / NBRC 105507 / MRE50)).